The sequence spans 661 residues: Heme transporter BhuA (661 aa).

Positions 1–23 (MKFTRTLVLASTSLLATVATSQA) are cleaved as a signal peptide. Positions 48 to 159 (KDNIEATGGT…AAGAIRYETV (112 aa)) constitute a TBDR plug domain. The 492-residue stretch at 170 to 661 (TFGARIIGSY…TFTFQTAFKF (492 aa)) folds into the TBDR beta-barrel domain.

It belongs to the TonB-dependent receptor family.

It localises to the cell outer membrane. Functionally, heme transporter. In Brucella abortus biovar 1 (strain 9-941), this protein is Heme transporter BhuA (bhuA).